Here is a 442-residue protein sequence, read N- to C-terminus: Histidine--tRNA ligase (442 aa).

It belongs to the class-II aminoacyl-tRNA synthetase family. In terms of assembly, homodimer.

It is found in the cytoplasm. The catalysed reaction is tRNA(His) + L-histidine + ATP = L-histidyl-tRNA(His) + AMP + diphosphate + H(+). This chain is Histidine--tRNA ligase (hisS), found in Treponema pallidum (strain Nichols).